We begin with the raw amino-acid sequence, 576 residues long: Sodium/hydrogen exchanger 8 (576 aa).

Helical transmembrane passes span 55 to 75 (MTIF…HLLI), 79 to 99 (LHFL…GAVI), 118 to 138 (PNMF…YSLH), 151 to 171 (LFAV…IYFL), 186 to 206 (FAFG…IFNA), 256 to 276 (LGYF…TGLI), 306 to 326 (GLAE…GIVM), 349 to 369 (VAFL…FSFP), 374 to 394 (ISFV…NIFP), 412 to 432 (MFIM…SLHL), and 446 to 466 (TTIV…MPLI). Thr-505 is modified (phosphothreonine). Residues Ser-566 and Ser-568 each carry the phosphoserine modification.

The protein belongs to the monovalent cation:proton antiporter 1 (CPA1) transporter (TC 2.A.36) family. In terms of tissue distribution, predominantly expressed in the liver, skeletal muscle, kidney, and testis. Expressed in both renal cortex and medulla. Detected throughout the entire gastrointestinal tract, with high expression detected in stomach, duodenum and ascending colon. In gastric epithelium; expressed in the glands within the fundus and pylorus regions.

Its subcellular location is the golgi apparatus membrane. It localises to the golgi apparatus. The protein resides in the trans-Golgi network membrane. It is found in the endosome. The protein localises to the multivesicular body membrane. Its subcellular location is the apical cell membrane. It localises to the cytoplasmic vesicle. The protein resides in the secretory vesicle. It is found in the acrosome. The catalysed reaction is Na(+)(in) + H(+)(out) = Na(+)(out) + H(+)(in). In terms of biological role, na(+)/H(+) antiporter. Mediates the electoneutral exchange of intracellular H(+) ions for extracellular Na(+) in 1:1 stoichiometry. Acts as an Na(+)/H(+) exchanger in the trans-Golgi. Contributes to the regulation of pH regulation of Golgi apparatus, and consequently, in protein trafficking and endosomal morphology. Plays a crucial role in germ cells in acrosome biogenesis and sperm development, probably by playing a role in the fusion of the Golgi-derived vesicles that form the acrosomal cap. Can also be active at the cell surface of specialized cells. In the small intestine, plays a major physiological role in transepithelial absorption of Na(+). Regulates intracellular pH homeostasis of intestinal epithelial cells. Acts as an important regulator of mucosal integrity in the intestine and in the stomach, could mediate the pH fluctuation necessary for mucin exocytosis or assist membrane trafficking of other proteins. Plays a role in photoreceptor survival and in the maintenance of intracellular pH homeostasis in retinal pigment epithelium (RPE cells). The sequence is that of Sodium/hydrogen exchanger 8 (Slc9a8) from Mus musculus (Mouse).